A 251-amino-acid polypeptide reads, in one-letter code: Probable transcriptional regulatory protein cbdbA400 (251 aa).

Belongs to the TACO1 family.

The protein resides in the cytoplasm. The polypeptide is Probable transcriptional regulatory protein cbdbA400 (Dehalococcoides mccartyi (strain CBDB1)).